A 228-amino-acid polypeptide reads, in one-letter code: MSTWANLGLQDSASPLMEQLIFFHDHALLILVMITVLVGYLMFMLFFNNYVNRFLLHGQLIEMIWTILPAIILLFIALPSLRLLYLLDEINEPSVTLKSIGHQWYWSYEYSDFNNIEFDSYMIPTNELAIDGFRLLDVDNRVILPMNSQIRILVTAADVIHSWTVPALGVKVDGTPGRLNQTNFFINRPGLFYGQCSEICGANHSFMPIVIESVPVNNFIKWISSNNS.

Residues 1 to 26 lie on the Mitochondrial intermembrane side of the membrane; that stretch reads MSTWANLGLQDSASPLMEQLIFFHDH. Residues 27–48 traverse the membrane as a helical segment; the sequence is ALLILVMITVLVGYLMFMLFFN. The Mitochondrial matrix segment spans residues 49-62; the sequence is NYVNRFLLHGQLIE. The chain crosses the membrane as a helical span at residues 63–82; sequence MIWTILPAIILLFIALPSLR. Over 83–228 the chain is Mitochondrial intermembrane; sequence LLYLLDEINE…FIKWISSNNS (146 aa). Cu cation contacts are provided by His161, Cys196, Glu198, Cys200, His204, and Met207. Position 198 (Glu198) interacts with Mg(2+).

It belongs to the cytochrome c oxidase subunit 2 family. Component of the cytochrome c oxidase (complex IV, CIV), a multisubunit enzyme composed of a catalytic core of 3 subunits and several supernumerary subunits. The complex exists as a monomer or a dimer and forms supercomplexes (SCs) in the inner mitochondrial membrane with ubiquinol-cytochrome c oxidoreductase (cytochrome b-c1 complex, complex III, CIII). The cofactor is Cu cation.

It localises to the mitochondrion inner membrane. The catalysed reaction is 4 Fe(II)-[cytochrome c] + O2 + 8 H(+)(in) = 4 Fe(III)-[cytochrome c] + 2 H2O + 4 H(+)(out). Functionally, component of the cytochrome c oxidase, the last enzyme in the mitochondrial electron transport chain which drives oxidative phosphorylation. The respiratory chain contains 3 multisubunit complexes succinate dehydrogenase (complex II, CII), ubiquinol-cytochrome c oxidoreductase (cytochrome b-c1 complex, complex III, CIII) and cytochrome c oxidase (complex IV, CIV), that cooperate to transfer electrons derived from NADH and succinate to molecular oxygen, creating an electrochemical gradient over the inner membrane that drives transmembrane transport and the ATP synthase. Cytochrome c oxidase is the component of the respiratory chain that catalyzes the reduction of oxygen to water. Electrons originating from reduced cytochrome c in the intermembrane space (IMS) are transferred via the dinuclear copper A center (CU(A)) of subunit 2 and heme A of subunit 1 to the active site in subunit 1, a binuclear center (BNC) formed by heme A3 and copper B (CU(B)). The BNC reduces molecular oxygen to 2 water molecules using 4 electrons from cytochrome c in the IMS and 4 protons from the mitochondrial matrix. In Drosophila yakuba (Fruit fly), this protein is Cytochrome c oxidase subunit 2 (mt:CoII).